A 112-amino-acid chain; its full sequence is Small ribosomal subunit protein uS17 (112 aa).

Belongs to the universal ribosomal protein uS17 family. Part of the 30S ribosomal subunit.

Its function is as follows. One of the primary rRNA binding proteins, it binds specifically to the 5'-end of 16S ribosomal RNA. This is Small ribosomal subunit protein uS17 from Haloarcula marismortui (strain ATCC 43049 / DSM 3752 / JCM 8966 / VKM B-1809) (Halobacterium marismortui).